Here is a 20-residue protein sequence, read N- to C-terminus: Agglutinin beta-1 chain (20 aa).

Residues 1–11 (NEQSGKSQTVI) show a composition bias toward polar residues. The tract at residues 1 to 20 (NEQSGKSQTVIVGSWGAKVS) is disordered.

Belongs to the jacalin lectin family. In terms of assembly, tetramer of four alpha chains associated with two or four beta chains.

Its function is as follows. D-galactose-specific lectin, binds the T-antigen structure Gal-beta1,3-GalNAc (Thomsen-Friedenreich-antigen-specific lectin). Potent and selective stimulant of distinct T- and B-cell functions. Shows a unique ability to specifically recognize IgA-1 from human serum. The protein is Agglutinin beta-1 chain of Artocarpus integer (Jack fruit).